The chain runs to 332 residues: Fe(3+) dicitrate transport system permease protein FecC (332 aa).

Topologically, residues 1 to 7 (MTAIKHP) are cytoplasmic. Residues 8 to 28 (VLLWGLPVAALIIIFWLSLFC) traverse the membrane as a helical segment. The Periplasmic segment spans residues 29-64 (YSAIPVSGADATRALLPGHTPTLPEALVQNLRLPRS). A helical transmembrane segment spans residues 65 to 85 (LVAVLIGASLALAGTLLQTLT). The Cytoplasmic segment spans residues 86–100 (HNPMASPSLLGINSG). Residues 101 to 121 (AALAMALTSALSPTPIAGYSL) traverse the membrane as a helical segment. A topological domain (periplasmic) is located at residue Ser122. A helical transmembrane segment spans residues 123–143 (FIAACGGGVSWLLVMTAGGGF). At 144–151 (RHTHDRNK) the chain is on the cytoplasmic side. The helical transmembrane segment at 152-172 (LILAGIALSAFCMGLTRITLL) threads the bilayer. The Periplasmic portion of the chain corresponds to 173 to 199 (LAEDHAYGIFYWLAGGVSHARWQDVWQ). The chain crosses the membrane as a helical span at residues 200–220 (LLPVVVTAVPVVLLLANQLNL). Residues 221-244 (LNLSDSTAHTLGVNLTRLRLVINM) lie on the Cytoplasmic side of the membrane. A helical transmembrane segment spans residues 245 to 265 (LVLLLVGACVSVAGPVAFIGL). Over 266–307 (LVPHLARFWAGFDQRNVLPVSMLLGATLMLLADVLARALAFP) the chain is Periplasmic. A helical transmembrane segment spans residues 308–328 (GDLPAGAVLALIGSPCFVWLV). The Cytoplasmic segment spans residues 329–332 (RRRG).

The protein belongs to the binding-protein-dependent transport system permease family. FecCD subfamily. As to quaternary structure, the complex is composed of two ATP-binding proteins (FecE), two transmembrane proteins (FecC and FecD) and a solute-binding protein (FecB). Interacts with FecB.

The protein localises to the cell inner membrane. Functionally, part of the ABC transporter complex FecBCDE involved in citrate-dependent Fe(3+) uptake. Probably responsible for the translocation of the substrate across the membrane. This is Fe(3+) dicitrate transport system permease protein FecC from Escherichia coli (strain K12).